Reading from the N-terminus, the 205-residue chain is V-type ATP synthase subunit E (205 aa).

The protein belongs to the V-ATPase E subunit family.

Produces ATP from ADP in the presence of a proton gradient across the membrane. The chain is V-type ATP synthase subunit E from Treponema denticola (strain ATCC 35405 / DSM 14222 / CIP 103919 / JCM 8153 / KCTC 15104).